The sequence spans 77 residues: Small ribosomal subunit protein bS16c (77 aa).

Belongs to the bacterial ribosomal protein bS16 family.

The protein localises to the plastid. It localises to the chloroplast. This Eucalyptus globulus subsp. globulus (Tasmanian blue gum) protein is Small ribosomal subunit protein bS16c.